The following is a 176-amino-acid chain: PRL-1 phosphatase (176 aa).

Positions 13–166 (APALIEYKGM…YKPKARLKHK (154 aa)) constitute a Tyrosine-protein phosphatase domain. Cys109 serves as the catalytic Phosphocysteine intermediate. Cys173 bears the Cysteine methyl ester mark. A lipid anchor (S-farnesyl cysteine) is attached at Cys173. Positions 174 to 176 (SVQ) are cleaved as a propeptide — removed in mature form.

The protein belongs to the protein-tyrosine phosphatase family. Homotrimer. Interacts with uex, possibly at the plasma membrane. As to expression, expressed in the adult head (at protein level). Expressed in neurons in the antennal lobe and V-glomeruli (at protein level). Expressed in dorsocentral neurons (at protein level).

The protein localises to the cytoplasm. The protein resides in the cell membrane. Its subcellular location is the apicolateral cell membrane. It localises to the cell projection. It is found in the axon. The enzyme catalyses O-phospho-L-tyrosyl-[protein] + H2O = L-tyrosyl-[protein] + phosphate. In terms of biological role, probable phosphatase. Inhibits growth possibly by negatively regulating Src64B-induced growth. Regulates central nervous system circuit formation and stabilization of synapse-dense terminal arbors. In dorsocentral neurons, regulates synaptogenesis in terminal arbors via modulation of the insulin receptor pathway, likely upstream of Akt1, and via reduction of PtdIns(4,5)P2 (Phosphatidylinositol 4,5-bisphosphate) levels. In the nervous system, plays a protective role together with uex in response to olfactory carbon dioxide stimulation. In Drosophila melanogaster (Fruit fly), this protein is PRL-1 phosphatase.